The following is a 159-amino-acid chain: Phosphopantetheine adenylyltransferase (159 aa).

Residue Ser9 coordinates substrate. ATP is bound by residues Ser9–Phe10 and His17. Substrate contacts are provided by Lys41, Leu73, and Lys87. Residues Gly88–Arg90, Glu98, and Tyr122–Ser128 each bind ATP.

It belongs to the bacterial CoaD family. In terms of assembly, homohexamer. Mg(2+) is required as a cofactor.

It localises to the cytoplasm. It catalyses the reaction (R)-4'-phosphopantetheine + ATP + H(+) = 3'-dephospho-CoA + diphosphate. Its pathway is cofactor biosynthesis; coenzyme A biosynthesis; CoA from (R)-pantothenate: step 4/5. Reversibly transfers an adenylyl group from ATP to 4'-phosphopantetheine, yielding dephospho-CoA (dPCoA) and pyrophosphate. The polypeptide is Phosphopantetheine adenylyltransferase (Streptomyces griseus subsp. griseus (strain JCM 4626 / CBS 651.72 / NBRC 13350 / KCC S-0626 / ISP 5235)).